We begin with the raw amino-acid sequence, 326 residues long: MSALIRHDWDLAEIEALLELPLVDLLWHAQQVHRDAHPAGYHVQLASLLSVKTGGCEEDCAYCPQSMHHSSDVTAQPELQLQVDGVLQQARSARDAGAHRFCMGWAWREIREGAPFDAMLAMVRGVRELGMEACVTAGMLTDSQAERLAQAGLTSYNHNLDTSPEHYDQIISTRTYQERLDTLQRARDAGLSLCCGGIIGMGESRRDRASLLQVLAGLNPHPESVPINGLVAVEGTPLEDQEPWEPLELVRMVAVARILMPEARVRLSAGRERLSQEAQILCLLAGADSIFYGDSLLTTSNPAVQADQALLAAAGVSSSLEGVAAA.

Residues 41-271 enclose the Radical SAM core domain; that stretch reads YHVQLASLLS…EARVRLSAGR (231 aa). The [4Fe-4S] cluster site is built by C56, C60, and C63. [2Fe-2S] cluster is bound by residues C102, C134, C194, and R266.

Belongs to the radical SAM superfamily. Biotin synthase family. In terms of assembly, homodimer. [4Fe-4S] cluster serves as cofactor. The cofactor is [2Fe-2S] cluster.

It catalyses the reaction (4R,5S)-dethiobiotin + (sulfur carrier)-SH + 2 reduced [2Fe-2S]-[ferredoxin] + 2 S-adenosyl-L-methionine = (sulfur carrier)-H + biotin + 2 5'-deoxyadenosine + 2 L-methionine + 2 oxidized [2Fe-2S]-[ferredoxin]. It participates in cofactor biosynthesis; biotin biosynthesis; biotin from 7,8-diaminononanoate: step 2/2. In terms of biological role, catalyzes the conversion of dethiobiotin (DTB) to biotin by the insertion of a sulfur atom into dethiobiotin via a radical-based mechanism. This is Biotin synthase from Synechococcus sp. (strain RCC307).